A 448-amino-acid polypeptide reads, in one-letter code: Iroquois-class homeodomain protein irx-3 (448 aa).

The homeobox; TALE-type DNA-binding region spans 108–170 (DPSRPKNATR…NARRRLKKEN (63 aa)). The interval 171 to 247 (KMTWAPRSRT…EVSDGFEDLN (77 aa)) is disordered. Residues 195–222 (KHEDEEEIDLENIDTEDIESKEDLDDPD) show a composition bias toward acidic residues. The segment covering 223–237 (TDIHSDSKTDTRSDS) has biased composition (basic and acidic residues). Residues 238-247 (EVSDGFEDLN) are compositionally biased toward acidic residues.

Belongs to the TALE/IRO homeobox family. As to expression, primarily expressed in the developing central nervous system (CNS). At gastrula stage, expressed in both the superficial and deep layers of the presumptive neural plate with expression spreading to the prospective hindbrain, spinal cord and midbrain-hindbrain junction as neurulation proceeds. Not expressed in the anterior neural plate and CNS expression in the tadpole excludes the forebrain. Outside of the CNS, expressed around the closing blastopore at early gastrula stages and as gastrulation proceeds, expression switches to the anterior lateral plate mesoderm. In tadpoles, expressed in the ectodermal layer of the branchial arches, and in the otic vesicle. Also expressed in specific and overlapping dynamic patterns with irx1 and irx2 during pronephric kidney development. Renal expression begins before segment-specific terminal differentiation in the pronephric anlage at mid-neurula stage, and is later found in proximal tubule PT3 as well as intermediate tubule segments IT1 and IT2, with expression in the kidney being maintained through to the tadpole stage.

The protein localises to the nucleus. Its function is as follows. Acts partially redundantly with other irx members in neural patterning. Required for formation of the posterior forebrain, midbrain, hindbrain, and to a lesser extent, spinal cord. Both up-regulates and down-regulates gene expression during neural development. Acts early in neural plate development to induce proneural gene expression and specify a neural precursor state. Also up-regulates repressors that prevent neuronal differentiation. Required during at least two stages of pronephros kidney development; during neurula stages, maintains transcription of key renal genes to define the size and identity of the pronephric anlage, probably in part through regulation of bmp-signaling. Subsequently required for proper formation of the intermediate tubule segment of the pronephros. The polypeptide is Iroquois-class homeodomain protein irx-3 (irx3) (Xenopus laevis (African clawed frog)).